Here is a 130-residue protein sequence, read N- to C-terminus: Large ribosomal subunit protein bL19 (130 aa).

It belongs to the bacterial ribosomal protein bL19 family.

Its function is as follows. This protein is located at the 30S-50S ribosomal subunit interface and may play a role in the structure and function of the aminoacyl-tRNA binding site. The sequence is that of Large ribosomal subunit protein bL19 from Methylorubrum populi (strain ATCC BAA-705 / NCIMB 13946 / BJ001) (Methylobacterium populi).